The sequence spans 150 residues: UPF0178 protein Sbal195_1808 (150 aa).

This sequence belongs to the UPF0178 family.

The polypeptide is UPF0178 protein Sbal195_1808 (Shewanella baltica (strain OS195)).